Here is a 481-residue protein sequence, read N- to C-terminus: Ribulose bisphosphate carboxylase large chain (481 aa).

The propeptide occupies 1 to 2 (MS). Proline 3 is subject to N-acetylproline. Residue lysine 14 is modified to N6,N6,N6-trimethyllysine. Substrate-binding residues include asparagine 123 and threonine 173. Catalysis depends on lysine 175, which acts as the Proton acceptor. A substrate-binding site is contributed by lysine 177. The Mg(2+) site is built by lysine 201, aspartate 203, and glutamate 204. Residue lysine 201 is modified to N6-carboxylysine. Catalysis depends on histidine 294, which acts as the Proton acceptor. Residues arginine 295, histidine 327, and serine 379 each contribute to the substrate site.

This sequence belongs to the RuBisCO large chain family. Type I subfamily. Heterohexadecamer of 8 large chains and 8 small chains; disulfide-linked. The disulfide link is formed within the large subunit homodimers. Mg(2+) is required as a cofactor. The disulfide bond which can form in the large chain dimeric partners within the hexadecamer appears to be associated with oxidative stress and protein turnover.

The protein resides in the plastid. The catalysed reaction is 2 (2R)-3-phosphoglycerate + 2 H(+) = D-ribulose 1,5-bisphosphate + CO2 + H2O. The enzyme catalyses D-ribulose 1,5-bisphosphate + O2 = 2-phosphoglycolate + (2R)-3-phosphoglycerate + 2 H(+). RuBisCO catalyzes two reactions: the carboxylation of D-ribulose 1,5-bisphosphate, the primary event in carbon dioxide fixation, as well as the oxidative fragmentation of the pentose substrate in the photorespiration process. Both reactions occur simultaneously and in competition at the same active site. This Cuscuta gronovii (Common dodder) protein is Ribulose bisphosphate carboxylase large chain.